The primary structure comprises 151 residues: Large ribosomal subunit protein uL15 (151 aa).

Residues 1–60 (MAENNPLKIHNLRPAPGAKTAKTRVGRGEASKGKTAGRGTKGTKARYQVPERFEGGQMPL) are disordered.

This sequence belongs to the universal ribosomal protein uL15 family. In terms of assembly, part of the 50S ribosomal subunit.

Functionally, binds to the 23S rRNA. This is Large ribosomal subunit protein uL15 from Streptomyces coelicolor (strain ATCC BAA-471 / A3(2) / M145).